Here is a 256-residue protein sequence, read N- to C-terminus: Adenylate kinase (256 aa).

49-54 (GAGKGT) is a binding site for ATP. The NMP stretch occupies residues 69–98 (ATGDMLRDQVEKKTPLGIAAKKIMDAGGLV). AMP-binding positions include threonine 70, arginine 75, 96-98 (GLV), 125-128 (GFPR), and glutamine 132. Residues 166–203 (GRLIHPASGRSYHKIFNPPKKAGIDDLTGEPLIQRSDD) are LID. ATP contacts are provided by residues arginine 167 and 176 to 177 (SY). AMP is bound by residues arginine 200 and arginine 211. Glutamine 239 serves as a coordination point for ATP.

This sequence belongs to the adenylate kinase family. AK2 subfamily. In terms of assembly, monomer.

Its subcellular location is the cytoplasm. The protein resides in the cytosol. It is found in the mitochondrion intermembrane space. The enzyme catalyses AMP + ATP = 2 ADP. In terms of biological role, catalyzes the reversible transfer of the terminal phosphate group between ATP and AMP. Plays an important role in cellular energy homeostasis and in adenine nucleotide metabolism. Adenylate kinase activity is critical for regulation of the phosphate utilization and the AMP de novo biosynthesis pathways. The polypeptide is Adenylate kinase (Coprinopsis cinerea (strain Okayama-7 / 130 / ATCC MYA-4618 / FGSC 9003) (Inky cap fungus)).